Reading from the N-terminus, the 341-residue chain is Serpentine receptor class epsilon-12 (341 aa).

7 consecutive transmembrane segments (helical) span residues 30–50, 57–77, 101–121, 140–160, 167–187, 230–250, and 262–282; these read TAFY…LFSA, FTLV…AIIV, AMTF…FSIL, YISY…AILL, IFVV…NQFL, LNFI…SVLF, and ICSL…PQIM.

This sequence belongs to the nematode receptor-like protein sre family.

Its subcellular location is the membrane. This chain is Serpentine receptor class epsilon-12 (sre-12), found in Caenorhabditis elegans.